The primary structure comprises 31 residues: Cytochrome b6-f complex subunit 6 (31 aa).

Residues Ile-4 to Ser-26 form a helical membrane-spanning segment.

This sequence belongs to the PetL family. In terms of assembly, the 4 large subunits of the cytochrome b6-f complex are cytochrome b6, subunit IV (17 kDa polypeptide, PetD), cytochrome f and the Rieske protein, while the 4 small subunits are PetG, PetL, PetM and PetN. The complex functions as a dimer.

The protein localises to the plastid. It localises to the chloroplast thylakoid membrane. In terms of biological role, component of the cytochrome b6-f complex, which mediates electron transfer between photosystem II (PSII) and photosystem I (PSI), cyclic electron flow around PSI, and state transitions. PetL is important for photoautotrophic growth as well as for electron transfer efficiency and stability of the cytochrome b6-f complex. This chain is Cytochrome b6-f complex subunit 6, found in Liriodendron tulipifera (Tuliptree).